We begin with the raw amino-acid sequence, 185 residues long: Elongation factor P (185 aa).

Belongs to the elongation factor P family.

It localises to the cytoplasm. It participates in protein biosynthesis; polypeptide chain elongation. Involved in peptide bond synthesis. Stimulates efficient translation and peptide-bond synthesis on native or reconstituted 70S ribosomes in vitro. Probably functions indirectly by altering the affinity of the ribosome for aminoacyl-tRNA, thus increasing their reactivity as acceptors for peptidyl transferase. The protein is Elongation factor P of Burkholderia cenocepacia (strain HI2424).